We begin with the raw amino-acid sequence, 273 residues long: Putative peptidyl-prolyl cis-trans isomerase Cbf2 (273 aa).

A signal peptide spans 1 to 21 (MKKFSLVAAALIAGVALNVNA). In terms of domain architecture, PpiC spans 131–228 (PARVQAKHIL…FGYHVILKEN (98 aa)).

It carries out the reaction [protein]-peptidylproline (omega=180) = [protein]-peptidylproline (omega=0). The polypeptide is Putative peptidyl-prolyl cis-trans isomerase Cbf2 (cbf2) (Campylobacter jejuni subsp. jejuni serotype O:23/36 (strain 81-176)).